The chain runs to 838 residues: Histidine biosynthesis trifunctional protein (838 aa).

The phosphoribosyl-AMP cyclohydrolase stretch occupies residues 1 to 271 (MIFPILPVIS…MVEPRTGYGF (271 aa)). Positions 272–360 (CHRETKFTCF…VYFAMVWCIK (89 aa)) are phosphoribosyl-ATP pyrophosphohydrolase. The tract at residues 361-838 (HGVRLADIEK…IRMERMAETK (478 aa)) is histidinol dehydrogenase. 2 residues coordinate Zn(2+): Gln-660 and His-663. Residues Glu-729 and His-730 contribute to the active site. Residues Asp-764 and His-823 each coordinate Zn(2+).

The protein in the C-terminal section; belongs to the histidinol dehydrogenase family. Zn(2+) is required as a cofactor.

It carries out the reaction 1-(5-phospho-beta-D-ribosyl)-5'-AMP + H2O = 1-(5-phospho-beta-D-ribosyl)-5-[(5-phospho-beta-D-ribosylamino)methylideneamino]imidazole-4-carboxamide. It catalyses the reaction 1-(5-phospho-beta-D-ribosyl)-ATP + H2O = 1-(5-phospho-beta-D-ribosyl)-5'-AMP + diphosphate + H(+). The enzyme catalyses L-histidinol + 2 NAD(+) + H2O = L-histidine + 2 NADH + 3 H(+). Its pathway is amino-acid biosynthesis; L-histidine biosynthesis; L-histidine from 5-phospho-alpha-D-ribose 1-diphosphate: step 2/9. The protein operates within amino-acid biosynthesis; L-histidine biosynthesis; L-histidine from 5-phospho-alpha-D-ribose 1-diphosphate: step 3/9. It participates in amino-acid biosynthesis; L-histidine biosynthesis; L-histidine from 5-phospho-alpha-D-ribose 1-diphosphate: step 9/9. This is Histidine biosynthesis trifunctional protein (HIS4) from Candida albicans (Yeast).